The sequence spans 350 residues: Guanine nucleotide-binding protein G(t) subunit alpha-1 (350 aa).

Positions 1–21 (MGAGASAEEKHSRELEKKLKE) are disordered. The N-myristoyl glycine moiety is linked to residue G2. Basic and acidic residues predominate over residues 7–21 (AEEKHSRELEKKLKE). In terms of domain architecture, G-alpha spans 28-350 (RTVKLLLLGA…KENLKDCGLF (323 aa)). The interval 31–44 (KLLLLGAGESGKST) is G1 motif. 36–43 (GAGESGKS) lines the GTP pocket. S43 is a Mg(2+) binding site. A Phosphotyrosine modification is found at Y142. GTP contacts are provided by residues D146, 171-177 (LRSRVKT), G199, 265-268 (NKKD), and A322. The tract at residues 169-177 (DVLRSRVKT) is G2 motif. Residue T177 coordinates Mg(2+). The G3 motif stretch occupies residues 192–201 (FRMFDVGGQR). The G4 motif stretch occupies residues 261–268 (VLFLNKKD). A G5 motif region spans residues 320–325 (TCATDT). The segment at 340-350 (IKENLKDCGLF) is interaction with RHO.

As to quaternary structure, heterotrimeric G proteins are composed of 3 subunits alpha, beta and gamma. The alpha chain contains the guanine nucleotide binding site. Interacts with RHO. Interacts with RGS9 and PDE6G. Interacts (when myristoylated) with UNC119; interaction is required for localization in sensory neurons. In terms of tissue distribution, rod.

It localises to the cell projection. Its subcellular location is the cilium. It is found in the photoreceptor outer segment. The protein localises to the membrane. The protein resides in the photoreceptor inner segment. Functions as a signal transducer for the rod photoreceptor RHO. Required for normal RHO-mediated light perception by the retina. Guanine nucleotide-binding proteins (G proteins) function as transducers downstream of G protein-coupled receptors (GPCRs), such as the photoreceptor RHO. The alpha chain contains the guanine nucleotide binding site and alternates between an active, GTP-bound state and an inactive, GDP-bound state. Activated RHO promotes GDP release and GTP binding. Signaling is mediated via downstream effector proteins, such as cGMP-phosphodiesterase. This Bos taurus (Bovine) protein is Guanine nucleotide-binding protein G(t) subunit alpha-1 (GNAT1).